Here is a 62-residue protein sequence, read N- to C-terminus: UPF0434 protein SPO3421 (62 aa).

Belongs to the UPF0434 family.

The polypeptide is UPF0434 protein SPO3421 (Ruegeria pomeroyi (strain ATCC 700808 / DSM 15171 / DSS-3) (Silicibacter pomeroyi)).